The following is a 137-amino-acid chain: Fluoride-specific ion channel FluC 1 (137 aa).

Transmembrane regions (helical) follow at residues 4 to 24 (LIYIIVGIAGILGALSRYYLG), 37 to 57 (LATLLINLVGCFLLAWLTTYI), 62 to 82 (ILPAEIITGIGTGFIGSFTTF), and 100 to 120 (IAFLYVSCSILGGLIMSGLGY). Gly77 and Thr80 together coordinate Na(+).

The protein belongs to the fluoride channel Fluc/FEX (TC 1.A.43) family.

It is found in the cell membrane. The catalysed reaction is fluoride(in) = fluoride(out). With respect to regulation, na(+) is not transported, but it plays an essential structural role and its presence is essential for fluoride channel function. Functionally, fluoride-specific ion channel. Important for reducing fluoride concentration in the cell, thus reducing its toxicity. In Bacillus cereus (strain ATCC 10987 / NRS 248), this protein is Fluoride-specific ion channel FluC 1.